The chain runs to 321 residues: UDP-3-O-acylglucosamine N-acyltransferase (321 aa).

Catalysis depends on His231, which acts as the Proton acceptor.

This sequence belongs to the transferase hexapeptide repeat family. LpxD subfamily. Homotrimer.

It carries out the reaction a UDP-3-O-[(3R)-3-hydroxyacyl]-alpha-D-glucosamine + a (3R)-hydroxyacyl-[ACP] = a UDP-2-N,3-O-bis[(3R)-3-hydroxyacyl]-alpha-D-glucosamine + holo-[ACP] + H(+). It functions in the pathway bacterial outer membrane biogenesis; LPS lipid A biosynthesis. In terms of biological role, catalyzes the N-acylation of UDP-3-O-acylglucosamine using 3-hydroxyacyl-ACP as the acyl donor. Is involved in the biosynthesis of lipid A, a phosphorylated glycolipid that anchors the lipopolysaccharide to the outer membrane of the cell. The sequence is that of UDP-3-O-acylglucosamine N-acyltransferase from Campylobacter jejuni subsp. jejuni serotype O:2 (strain ATCC 700819 / NCTC 11168).